The sequence spans 481 residues: uncharacterized protein (481 aa).

13 helical membrane-spanning segments follow: residues 3 to 23 (YLPM…LLHG), 33 to 53 (FITA…YYYF), 75 to 95 (QAII…GMGE), 99 to 119 (NNMF…IVLA), 122 to 142 (IFNL…LVFL), 155 to 175 (YMIM…FLLA), 196 to 216 (IYGG…LPPF), 241 to 261 (FVLV…DYFA), 264 to 284 (HAVL…MALL), 303 to 323 (VATG…FHAI), 351 to 371 (GGLL…KLAI), 400 to 420 (IIMI…FYLI), and 443 to 463 (VFSL…PDIV).

The protein resides in the cell membrane. This is an uncharacterized protein from Methanocaldococcus jannaschii (strain ATCC 43067 / DSM 2661 / JAL-1 / JCM 10045 / NBRC 100440) (Methanococcus jannaschii).